The chain runs to 232 residues: 5'-methylthioadenosine/S-adenosylhomocysteine nucleosidase (232 aa).

The active-site Proton acceptor is the E12. Residues G78, I152, and 173-174 each bind substrate; that span reads ME. The active-site Proton donor is the D197.

The protein belongs to the PNP/UDP phosphorylase family. MtnN subfamily. In terms of assembly, homodimer.

The enzyme catalyses S-adenosyl-L-homocysteine + H2O = S-(5-deoxy-D-ribos-5-yl)-L-homocysteine + adenine. It catalyses the reaction S-methyl-5'-thioadenosine + H2O = 5-(methylsulfanyl)-D-ribose + adenine. The catalysed reaction is 5'-deoxyadenosine + H2O = 5-deoxy-D-ribose + adenine. It functions in the pathway amino-acid biosynthesis; L-methionine biosynthesis via salvage pathway; S-methyl-5-thio-alpha-D-ribose 1-phosphate from S-methyl-5'-thioadenosine (hydrolase route): step 1/2. In terms of biological role, catalyzes the irreversible cleavage of the glycosidic bond in both 5'-methylthioadenosine (MTA) and S-adenosylhomocysteine (SAH/AdoHcy) to adenine and the corresponding thioribose, 5'-methylthioribose and S-ribosylhomocysteine, respectively. Also cleaves 5'-deoxyadenosine, a toxic by-product of radical S-adenosylmethionine (SAM) enzymes, into 5-deoxyribose and adenine. Thus, is required for in vivo function of the radical SAM enzymes biotin synthase and lipoic acid synthase, that are inhibited by 5'-deoxyadenosine accumulation. This chain is 5'-methylthioadenosine/S-adenosylhomocysteine nucleosidase, found in Escherichia fergusonii (strain ATCC 35469 / DSM 13698 / CCUG 18766 / IAM 14443 / JCM 21226 / LMG 7866 / NBRC 102419 / NCTC 12128 / CDC 0568-73).